Reading from the N-terminus, the 689-residue chain is tRNA 5-methylaminomethyl-2-thiouridine biosynthesis bifunctional protein MnmC (689 aa).

Residues 1–245 (MNQRPIQTAT…KREMLTGTLP (245 aa)) form a tRNA (mnm(5)s(2)U34)-methyltransferase region. The FAD-dependent cmnm(5)s(2)U34 oxidoreductase stretch occupies residues 270–689 (IGGGIVSALT…RSPATQESSR (420 aa)).

The protein in the N-terminal section; belongs to the methyltransferase superfamily. tRNA (mnm(5)s(2)U34)-methyltransferase family. It in the C-terminal section; belongs to the DAO family. It depends on FAD as a cofactor.

It is found in the cytoplasm. The enzyme catalyses 5-aminomethyl-2-thiouridine(34) in tRNA + S-adenosyl-L-methionine = 5-methylaminomethyl-2-thiouridine(34) in tRNA + S-adenosyl-L-homocysteine + H(+). Catalyzes the last two steps in the biosynthesis of 5-methylaminomethyl-2-thiouridine (mnm(5)s(2)U) at the wobble position (U34) in tRNA. Catalyzes the FAD-dependent demodification of cmnm(5)s(2)U34 to nm(5)s(2)U34, followed by the transfer of a methyl group from S-adenosyl-L-methionine to nm(5)s(2)U34, to form mnm(5)s(2)U34. This is tRNA 5-methylaminomethyl-2-thiouridine biosynthesis bifunctional protein MnmC from Yersinia pseudotuberculosis serotype O:1b (strain IP 31758).